The following is a 273-amino-acid chain: Type III pantothenate kinase (273 aa).

An ATP-binding site is contributed by 7 to 14; the sequence is DVGNTAIK. Residues Phe119 and 124-127 each bind substrate; that span reads GIDR. The active-site Proton acceptor is Asp126. Position 146 (Asp146) interacts with K(+). Residue Thr149 coordinates ATP. Position 206 (Thr206) interacts with substrate.

Belongs to the type III pantothenate kinase family. As to quaternary structure, homodimer. NH4(+) serves as cofactor. Requires K(+) as cofactor.

Its subcellular location is the cytoplasm. The catalysed reaction is (R)-pantothenate + ATP = (R)-4'-phosphopantothenate + ADP + H(+). Its pathway is cofactor biosynthesis; coenzyme A biosynthesis; CoA from (R)-pantothenate: step 1/5. Functionally, catalyzes the phosphorylation of pantothenate (Pan), the first step in CoA biosynthesis. In Rhodopirellula baltica (strain DSM 10527 / NCIMB 13988 / SH1), this protein is Type III pantothenate kinase.